Consider the following 708-residue polypeptide: Leukotoxin translocation ATP-binding protein LktB (708 aa).

The Peptidase C39 domain maps to 1–126 (MEANHQRNDL…ACYQGQLILV (126 aa)). The ABC transmembrane type-1 domain occupies 155-437 (FLETLIVSIF…LAQLWQDFQQ (283 aa)). The next 5 membrane-spanning stretches (helical) occupy residues 159–179 (LIVS…FQVV), 192–212 (LNII…LSGL), 270–290 (ALTS…MWYY), 296–316 (LVIL…SPIL), and 389–409 (VMVI…LSIG). The 236-residue stretch at 469 to 704 (ISFKNIRFRY…SNGLYSYLHQ (236 aa)) folds into the ABC transporter domain. 503 to 510 (GRSGSGKS) lines the ATP pocket.

It belongs to the ABC transporter superfamily. Protein-1 exporter (TC 3.A.1.109) family. In terms of assembly, homodimer.

The protein localises to the cell inner membrane. The enzyme catalyses ATP + H2O + proteinSide 1 = ADP + phosphate + proteinSide 2.. In terms of biological role, part of the ABC transporter complex LktBD involved in leukotoxin export. Transmembrane domains (TMD) form a pore in the inner membrane and the ATP-binding domain (NBD) is responsible for energy generation. The sequence is that of Leukotoxin translocation ATP-binding protein LktB (lktB) from Bibersteinia trehalosi (Pasteurella trehalosi).